The chain runs to 186 residues: Ribosome-recycling factor (186 aa).

The protein belongs to the RRF family.

The protein localises to the cytoplasm. Functionally, responsible for the release of ribosomes from messenger RNA at the termination of protein biosynthesis. May increase the efficiency of translation by recycling ribosomes from one round of translation to another. This chain is Ribosome-recycling factor, found in Rickettsia akari (strain Hartford).